The sequence spans 124 residues: Large ribosomal subunit protein bL12 (124 aa).

This sequence belongs to the bacterial ribosomal protein bL12 family. Homodimer. Part of the ribosomal stalk of the 50S ribosomal subunit. Forms a multimeric L10(L12)X complex, where L10 forms an elongated spine to which 2 to 4 L12 dimers bind in a sequential fashion. Binds GTP-bound translation factors.

Functionally, forms part of the ribosomal stalk which helps the ribosome interact with GTP-bound translation factors. Is thus essential for accurate translation. This chain is Large ribosomal subunit protein bL12, found in Burkholderia thailandensis (strain ATCC 700388 / DSM 13276 / CCUG 48851 / CIP 106301 / E264).